Reading from the N-terminus, the 325-residue chain is Intelectin (325 aa).

An N-terminal signal peptide occupies residues 1–23 (MKYCVLLIMIHLLLVELPQFPEA). Positions 44–266 (IRSSYIGRSC…AAMAICSGVK (223 aa)) constitute a Fibrinogen C-terminal domain. A disulfide bridge connects residues Cys-53 and Cys-82. Ca(2+) contacts are provided by His-98, Glu-99, Asn-101, Gly-104, Gly-109, Asp-110, Asp-145, Glu-274, Glu-286, and Asp-294. Cystine bridges form between Cys-106–Cys-292 and Cys-262–Cys-277. A carbohydrate contacts are provided by residues 274–275 (EH) and Glu-286.

In terms of tissue distribution, expressed at high levels in caudal kidney, liver, and swim bladder. Also expressed in gill, spleen, intestine and head kidney. Not detected in heart.

Functionally, may be involved in innate immune surveillance. May specifically recognize carbohydrate chains of pathogens and bacterial components in a calcium-dependent manner. In vitro binds N-acetylglucosamine residues. This is Intelectin from Oncorhynchus mykiss (Rainbow trout).